Here is a 296-residue protein sequence, read N- to C-terminus: Protoheme IX farnesyltransferase (296 aa).

9 helical membrane passes run 9-29 (VTKP…FLLA), 36-56 (YPLF…GCVF), 75-95 (VLVK…VLGI), 99-119 (LLLY…GFVI), 133-153 (VYGT…GYCA), 163-183 (LILL…IAIF), 209-229 (ITLY…SGYA), 234-254 (LVVA…GYKA), and 265-285 (FVFS…DFNV).

The protein belongs to the UbiA prenyltransferase family. Protoheme IX farnesyltransferase subfamily.

The protein resides in the cell inner membrane. It catalyses the reaction heme b + (2E,6E)-farnesyl diphosphate + H2O = Fe(II)-heme o + diphosphate. It participates in porphyrin-containing compound metabolism; heme O biosynthesis; heme O from protoheme: step 1/1. In terms of biological role, converts heme B (protoheme IX) to heme O by substitution of the vinyl group on carbon 2 of heme B porphyrin ring with a hydroxyethyl farnesyl side group. The chain is Protoheme IX farnesyltransferase from Yersinia pestis bv. Antiqua (strain Antiqua).